The chain runs to 485 residues: E3 ubiquitin-protein ligase TRIM34A (485 aa).

An RING-type zinc finger spans residues 15 to 59; it reads CPVCQELLTKALSLGCGHRVCQACLITKKNAVINPREKSSCPVCG. A B box-type zinc finger spans residues 91 to 132; the sequence is TKRDLCVHHGEKLLLFCKEDKKAICWVCERSQEHRGHHTFLW. Positions 96, 99, 118, and 124 each coordinate Zn(2+). Positions 136 to 170 form a coiled coil; sequence VRECQENLQKALTRLRKEQEKVETLEADIKEDRLS. The B30.2/SPRY domain occupies 282-485; it reads LSGMLQKFRE…APMTLCPLNS (204 aa).

Belongs to the TRIM/RBCC family. As to quaternary structure, homotrimer. Interacts (via B-box and SPRY domain) with TRIM5.

It localises to the cytoplasm. Its subcellular location is the mitochondrion. It carries out the reaction S-ubiquitinyl-[E2 ubiquitin-conjugating enzyme]-L-cysteine + [acceptor protein]-L-lysine = [E2 ubiquitin-conjugating enzyme]-L-cysteine + N(6)-ubiquitinyl-[acceptor protein]-L-lysine.. The protein operates within protein modification; protein ubiquitination. In terms of biological role, functions as antiviral protein and contributes to the defense against retroviral infections. Acts as a capsid-specific restriction factor with the help of TRIM5 and prevents infection from non-host-adapted retroviruses. During influenza A virus infection, promotes programmed cell death by targeting ZBP1 for 'Lys-63'-linked polyubiquitination. In turn, promotes ZBP1 recruitment of RIPK3 to mediate virus-induced programmed necrosis. Negatively regulates the function of mitochondria by enhancing mitochondrial depolarization leading to cytochrome c release and mitochondria-dependent apoptosis. Also promotes the formation of multinucleated giant cells by means of cell fusion and phagocytosis in epithelial cells. Plays an essential role in sustaining the integrity of the inner mucus layer in the colon by controlling the exocytosis of the major component of colonic mucus MUC2 from colonic goblet cells. The polypeptide is E3 ubiquitin-protein ligase TRIM34A (Mus musculus (Mouse)).